The following is a 994-amino-acid chain: MTDHAENRCGLEGPRPFSSRHVGSVEDDLRYIAETIGVTSPEQIIRDAIPASVLDSNEGDSSVRTPSFPPAADETTARAELVEIASGNRVTRALIGRGYYGTLTPPVIRRNILENPSWYTAYTPYQPEISQGRLEMLTIYQQLITDLTGLALANSSLLDEATAASEGMLLARRAARKVKSNRFLVHTHLFDQVRDVVLGHAEATGIEVVETDLRDPQSWRPEVEAGCFGVLAPYPDSTGALWNPSEVFDAVHKVGGITIAECDLLSLTLLAPPGELGADVAVGSSQRFGVPMGNGGPHAAYMSVRSGLERQIPGRLVGVSTDADGNPAYRLALQTREQHIRRDKATSNICTAQVLLAVVAAAYAVWHGPTGLTRIARQVTDRAHQLASALRAAGLDVADQQFFDTIRIRTKGGAKELWNRAREGGYTLDLVDGDILQISVDETVTDDELRELTQLLGGSTDEIRGPADRAWPEDLRRTSSFMTHPVFSSYHTETTMMRYLKRLADHDYGLDRGMIPLGSCTMKLNAAAEMEAMTWPAFSQMHPFAPVEDQAGSLRLIRDLEIWLAELTGYDTVSLQPNAGSQGEYTGLAAIRSYHVSRGDTERNVCLVPASAHGTNAASAASAGLRVVVVKSNDDGTIDRDDLAAKIAANEGRIAAIMITYPSTHGVYEDGVRQVCDMVHEAGGQVYIDGANFNALVGWGQFARIGGDVSHLNLHKTFAIPHGGGGPGVGPVAAKAHLAPFLPGHPLNPRNEHPLNDGGTVTHDGHAVSAAPFGSVSVLPISWAYLRLMGLKGLQFATEVAVLNANYIAHRLHDKIPILYTGQNGYVAHECILDLRPLTTETGITVDDVAKRLIDYGFHAPTMSFPVAGTLMVEPTESEDLAELDRFCDAMLAIVEEARMVQSGHWPANDNPLINAPHPAARLVADEWNHPYSRELGCYPGMRLGIQRDQERGLDVNTVTRIQAKYWPPVGRVDNTYGDRHLVCSCPPPEAFED.

The interval 1–20 (MTDHAENRCGLEGPRPFSSR) is disordered. An N6-(pyridoxal phosphate)lysine modification is found at lysine 716.

It belongs to the GcvP family. As to quaternary structure, the glycine cleavage system is composed of four proteins: P, T, L and H. Requires pyridoxal 5'-phosphate as cofactor.

It catalyses the reaction N(6)-[(R)-lipoyl]-L-lysyl-[glycine-cleavage complex H protein] + glycine + H(+) = N(6)-[(R)-S(8)-aminomethyldihydrolipoyl]-L-lysyl-[glycine-cleavage complex H protein] + CO2. The glycine cleavage system catalyzes the degradation of glycine. The P protein binds the alpha-amino group of glycine through its pyridoxal phosphate cofactor; CO(2) is released and the remaining methylamine moiety is then transferred to the lipoamide cofactor of the H protein. The sequence is that of Glycine dehydrogenase (decarboxylating) from Cutibacterium acnes (strain DSM 16379 / KPA171202) (Propionibacterium acnes).